The primary structure comprises 73 residues: uncharacterized protein (73 aa).

2 helical membrane passes run 4–24 (LIPV…SPCV) and 51–71 (AGAI…IIAL).

It is found in the cell membrane. This is an uncharacterized protein from Escherichia coli O157:H7.